A 64-amino-acid polypeptide reads, in one-letter code: Movement protein TGBp3 (64 aa).

Over 1 to 4 (MRSV) the chain is Lumenal. Residues 5 to 27 (ALTLCAIIAGYLLVSNLQNVFSP) form a helical membrane-spanning segment. Residues 28–64 (EVCTLVITGESIRINGCNLSPAHFRAISHLKVLQIHL) are Cytoplasmic-facing.

This sequence belongs to the Tymovirales TGBp3 protein family.

The protein localises to the host endoplasmic reticulum membrane. Plays a role in viral cell-to-cell propagation, by facilitating genome transport to neighboring plant cells through plasmosdesmata. May induce the formation of granular vesicles derived from the Endoplasmic reticulum, which align on actin filaments. The sequence is that of Movement protein TGBp3 from Lily symptomless virus (LSV).